A 395-amino-acid polypeptide reads, in one-letter code: Putative 8-amino-7-oxononanoate synthase (395 aa).

Position 23 (R23) interacts with substrate. Residue 110–111 (GF) participates in pyridoxal 5'-phosphate binding. H135 is a binding site for substrate. Residues S182, 207 to 210 (DEAH), and 239 to 242 (TFSK) contribute to the pyridoxal 5'-phosphate site. Position 242 is an N6-(pyridoxal phosphate)lysine (K242). Residue T356 participates in substrate binding.

The protein belongs to the class-II pyridoxal-phosphate-dependent aminotransferase family. BioF subfamily. Homodimer. Pyridoxal 5'-phosphate serves as cofactor.

It catalyses the reaction 6-carboxyhexanoyl-[ACP] + L-alanine + H(+) = (8S)-8-amino-7-oxononanoate + holo-[ACP] + CO2. The protein operates within cofactor biosynthesis; biotin biosynthesis. Functionally, catalyzes the decarboxylative condensation of pimeloyl-[acyl-carrier protein] and L-alanine to produce 8-amino-7-oxononanoate (AON), [acyl-carrier protein], and carbon dioxide. This chain is Putative 8-amino-7-oxononanoate synthase (bioF), found in Bacillus thuringiensis subsp. konkukian (strain 97-27).